A 261-amino-acid polypeptide reads, in one-letter code: Glutamate racemase (261 aa).

Substrate is bound by residues aspartate 7–serine 8 and tyrosine 39–glycine 40. Catalysis depends on cysteine 71, which acts as the Proton donor/acceptor. Residue asparagine 72 to threonine 73 coordinates substrate. Cysteine 184 (proton donor/acceptor) is an active-site residue. Threonine 185–histidine 186 lines the substrate pocket.

This sequence belongs to the aspartate/glutamate racemases family.

It carries out the reaction L-glutamate = D-glutamate. It participates in cell wall biogenesis; peptidoglycan biosynthesis. Functionally, provides the (R)-glutamate required for cell wall biosynthesis. The chain is Glutamate racemase from Aliarcobacter butzleri (strain RM4018) (Arcobacter butzleri).